We begin with the raw amino-acid sequence, 309 residues long: Ribonuclease Z (309 aa).

Positions 63, 65, 67, 68, 145, 216, and 274 each coordinate Zn(2+). Aspartate 67 (proton acceptor) is an active-site residue.

It belongs to the RNase Z family. Homodimer. The cofactor is Zn(2+).

The enzyme catalyses Endonucleolytic cleavage of RNA, removing extra 3' nucleotides from tRNA precursor, generating 3' termini of tRNAs. A 3'-hydroxy group is left at the tRNA terminus and a 5'-phosphoryl group is left at the trailer molecule.. Zinc phosphodiesterase, which displays some tRNA 3'-processing endonuclease activity. Probably involved in tRNA maturation, by removing a 3'-trailer from precursor tRNA. The polypeptide is Ribonuclease Z (Streptococcus equi subsp. equi (strain 4047)).